Reading from the N-terminus, the 364-residue chain is Methylthioribose-1-phosphate isomerase (364 aa).

Aspartate 254 (proton donor) is an active-site residue.

Belongs to the eIF-2B alpha/beta/delta subunits family. MtnA subfamily.

It is found in the cytoplasm. It localises to the nucleus. It carries out the reaction 5-(methylsulfanyl)-alpha-D-ribose 1-phosphate = 5-(methylsulfanyl)-D-ribulose 1-phosphate. It functions in the pathway amino-acid biosynthesis; L-methionine biosynthesis via salvage pathway; L-methionine from S-methyl-5-thio-alpha-D-ribose 1-phosphate: step 1/6. In terms of biological role, catalyzes the interconversion of methylthioribose-1-phosphate (MTR-1-P) into methylthioribulose-1-phosphate (MTRu-1-P). The polypeptide is Methylthioribose-1-phosphate isomerase (Drosophila erecta (Fruit fly)).